Consider the following 174-residue polypeptide: Ribulose bisphosphate carboxylase small subunit, chloroplastic 1 (174 aa).

The N-terminal 45 residues, 1 to 45, are a transit peptide targeting the chloroplast; the sequence is MAPAVMASSATTVAPFQGLKSTAGLPVSRRSRGSLGSVSNGGRIR.

This sequence belongs to the RuBisCO small chain family. As to quaternary structure, heterohexadecamer of 8 large and 8 small subunits.

It localises to the plastid. Its subcellular location is the chloroplast. Its function is as follows. RuBisCO catalyzes two reactions: the carboxylation of D-ribulose 1,5-bisphosphate, the primary event in carbon dioxide fixation, as well as the oxidative fragmentation of the pentose substrate. Both reactions occur simultaneously and in competition at the same active site. Although the small subunit is not catalytic it is essential for maximal activity. The protein is Ribulose bisphosphate carboxylase small subunit, chloroplastic 1 of Triticum aestivum (Wheat).